Consider the following 366-residue polypeptide: Cellular tumor antigen p53 (366 aa).

Residues 1–41 (MMDEQGLDGMQILPGSQDSFSELWASVQTPSIATIAEEFDD) are transcription activation (acidic). Residues 80–267 (DYPGEYGFQL…KTDEESSTKT (188 aa)) mediate DNA binding. Residues Cys-154, His-157, Cys-213, and Cys-217 each contribute to the Zn(2+) site. The interval 248–255 (RVCACPGR) is interaction with DNA. Positions 255–264 (RDRKTDEESS) are enriched in basic and acidic residues. The disordered stretch occupies residues 255–305 (RDRKTDEESSTKTPNGPKQTKKRKQAPSNSAPHTTTVMKSKSSSSAEEEDK). Positions 275–295 (KKRKQAPSNSAPHTTTVMKSK) match the Bipartite nuclear localization signal motif. Polar residues predominate over residues 280–292 (APSNSAPHTTTVM). The tract at residues 305–336 (KEVFTVLVKGRERYEIIKKINEAFEGAAEKEK) is oligomerization. Positions 319-330 (EIIKKINEAFEG) match the Nuclear export signal motif. The tract at residues 332 to 366 (AEKEKAKNKVAVKQELPVPSSGKRLVQRGERSDSD) is disordered. The segment at 341-362 (VAVKQELPVPSSGKRLVQRGER) is basic (repression of DNA-binding).

The protein belongs to the p53 family. As to quaternary structure, binds DNA as a homotetramer. The cofactor is Zn(2+).

Its subcellular location is the cytoplasm. The protein resides in the nucleus. Multifunctional transcription factor that induces cell cycle arrest, DNA repair or apoptosis upon binding to its target DNA sequence. Acts as a tumor suppressor in many tumor types; induces growth arrest or apoptosis depending on the physiological circumstances and cell type. Negatively regulates cell division by controlling expression of a set of genes required for this process. One of the activated genes is an inhibitor of cyclin-dependent kinases. Apoptosis induction seems to be mediated either by stimulation of BAX and FAS antigen expression, or by repression of Bcl-2 expression. The sequence is that of Cellular tumor antigen p53 (tp53) from Platichthys flesus (European flounder).